The primary structure comprises 204 residues: Holliday junction resolvase RecU (204 aa).

The Mg(2+) site is built by Thr89, Asp91, Asp104, and Gln123.

It belongs to the RecU family. The cofactor is Mg(2+).

Its subcellular location is the cytoplasm. It catalyses the reaction Endonucleolytic cleavage at a junction such as a reciprocal single-stranded crossover between two homologous DNA duplexes (Holliday junction).. Endonuclease that resolves Holliday junction intermediates in genetic recombination. Cleaves mobile four-strand junctions by introducing symmetrical nicks in paired strands. Promotes annealing of linear ssDNA with homologous dsDNA. Required for DNA repair, homologous recombination and chromosome segregation. The protein is Holliday junction resolvase RecU of Leuconostoc mesenteroides subsp. mesenteroides (strain ATCC 8293 / DSM 20343 / BCRC 11652 / CCM 1803 / JCM 6124 / NCDO 523 / NBRC 100496 / NCIMB 8023 / NCTC 12954 / NRRL B-1118 / 37Y).